We begin with the raw amino-acid sequence, 319 residues long: Tryptophan--tRNA ligase (319 aa).

Residues 8-10 (QPS) and 16-17 (GN) each bind ATP. A 'HIGH' region motif is present at residues 9 to 17 (PSGDLHIGN). D131 contributes to the L-tryptophan binding site. ATP-binding positions include 143–145 (GKD), V182, and 189–193 (KMSKS). Residues 189-193 (KMSKS) carry the 'KMSKS' region motif.

The protein belongs to the class-I aminoacyl-tRNA synthetase family. In terms of assembly, homodimer.

It localises to the cytoplasm. It catalyses the reaction tRNA(Trp) + L-tryptophan + ATP = L-tryptophyl-tRNA(Trp) + AMP + diphosphate + H(+). Its function is as follows. Catalyzes the attachment of tryptophan to tRNA(Trp). The chain is Tryptophan--tRNA ligase from Campylobacter jejuni subsp. jejuni serotype O:2 (strain ATCC 700819 / NCTC 11168).